A 175-amino-acid chain; its full sequence is NADH-ubiquinone oxidoreductase chain 6 (175 aa).

A run of 5 helical transmembrane segments spans residues M1–S21, S25–M45, F47–V67, V88–L108, and Y149–L169.

The protein belongs to the complex I subunit 6 family.

The protein resides in the mitochondrion membrane. It carries out the reaction a ubiquinone + NADH + 5 H(+)(in) = a ubiquinol + NAD(+) + 4 H(+)(out). Core subunit of the mitochondrial membrane respiratory chain NADH dehydrogenase (Complex I) that is believed to belong to the minimal assembly required for catalysis. Complex I functions in the transfer of electrons from NADH to the respiratory chain. The immediate electron acceptor for the enzyme is believed to be ubiquinone. In Rhinolophus monoceros (Formosan lesser horseshoe bat), this protein is NADH-ubiquinone oxidoreductase chain 6 (MT-ND6).